Here is a 402-residue protein sequence, read N- to C-terminus: uncharacterized protein (402 aa).

The interval 332-402 (MFSSSSSSSE…PEPPPGKPGR (71 aa)) is disordered. Over residues 370 to 379 (SETTSLQQYS) the composition is skewed to polar residues. Positions 393 to 402 (PEPPPGKPGR) are enriched in pro residues.

This is an uncharacterized protein from Mus musculus (Mouse).